The chain runs to 490 residues: E3 ubiquitin-protein ligase Hakai (490 aa).

A disordered region spans residues 34-60; the sequence is QANKAKPAPRTQRTINRMPAKAPPGDE. The segment at 108 to 148 adopts an RING-type zinc-finger fold; sequence CDKCGLPIKIYGRMIPCKHVFCYDCAILHEKKGDKMCPGCS. Residues 147–205 form an HYB domain region; sequence CSDPVQRIEQCTRGSLFMCSIVQGCKRTYLSQRDLQAHINHRHMRAGKPVTRASLENVH. A C2H2-type zinc finger spans residues 163-189; the sequence is FMCSIVQGCKRTYLSQRDLQAHINHRH. A phosphoserine mark is found at Ser-200, Ser-284, and Ser-289. The tract at residues 254–490 is disordered; the sequence is QPHEDIRAPP…DQTRYRPYYQ (237 aa). Pro residues-rich tracts occupy residues 341 to 358, 371 to 388, and 398 to 422; these read APPPPPPPPISHPMPHPP, APPPPMTSAPPPITPPPG, and MNHPPPGPPPPQHGGPPVTAPPPHH. The segment covering 426 to 441 has biased composition (polar residues); that stretch reads NSLPQFTEDQGTLSPP. Residues 456–477 are compositionally biased toward pro residues; it reads PRGPPPPPRLQGPPSQTPLPGP.

This sequence belongs to the Hakai family. As to quaternary structure, homodimer. Interacts with tyrosine-phosphorylated SRC substrates. Component of the WMM complex, a N6-methyltransferase complex composed of a catalytic subcomplex, named MAC, and of an associated subcomplex, named MACOM. The MAC subcomplex is composed of METTL3 and METTL14. The MACOM subcomplex is composed of WTAP, ZC3H13, CBLL1/HAKAI, VIRMA, and, in some cases of RBM15 (RBM15 or RBM15B). Also a component of a MACOM-like complex, named WTAP complex, composed of WTAP, ZC3H13, CBLL1, VIRMA, RBM15, BCLAF1 and THRAP3. Phosphorylated on tyrosine residues.

The protein localises to the nucleus speckle. Its subcellular location is the nucleus. The protein resides in the nucleoplasm. It is found in the cytoplasm. It catalyses the reaction S-ubiquitinyl-[E2 ubiquitin-conjugating enzyme]-L-cysteine + [acceptor protein]-L-lysine = [E2 ubiquitin-conjugating enzyme]-L-cysteine + N(6)-ubiquitinyl-[acceptor protein]-L-lysine.. It functions in the pathway protein modification; protein ubiquitination. Functionally, E3 ubiquitin-protein ligase that mediates ubiquitination of several tyrosine-phosphorylated Src substrates, including CDH1, CTTN and DOK1. Targets CDH1 for endocytosis and degradation. Associated component of the WMM complex, a complex that mediates N6-methyladenosine (m6A) methylation of RNAs, a modification that plays a role in the efficiency of mRNA splicing and RNA processing. Its function in the WMM complex is unknown. This Macaca fascicularis (Crab-eating macaque) protein is E3 ubiquitin-protein ligase Hakai.